The sequence spans 160 residues: Cytochrome c-type biogenesis protein CcmE (160 aa).

The Cytoplasmic portion of the chain corresponds to 1–8 (MNPRRKNR). A helical; Signal-anchor for type II membrane protein membrane pass occupies residues 9 to 29 (LILVMLVLVGLGLATALVMYA). Topologically, residues 30 to 160 (LRSNIDLFYT…AVGDNSVRPS (131 aa)) are periplasmic. Residues H130 and Y134 each coordinate heme. A compositionally biased stretch (basic and acidic residues) spans 133–148 (KYTPPEIEDAMKKDHP). The segment at 133-160 (KYTPPEIEDAMKKDHPAQAVGDNSVRPS) is disordered.

It belongs to the CcmE/CycJ family.

Its subcellular location is the cell inner membrane. Heme chaperone required for the biogenesis of c-type cytochromes. Transiently binds heme delivered by CcmC and transfers the heme to apo-cytochromes in a process facilitated by CcmF and CcmH. In Erwinia tasmaniensis (strain DSM 17950 / CFBP 7177 / CIP 109463 / NCPPB 4357 / Et1/99), this protein is Cytochrome c-type biogenesis protein CcmE.